The chain runs to 288 residues: Hemin import ATP-binding protein HmuV (288 aa).

Residues 31 to 269 enclose the ABC transporter domain; sequence LRARGLVVER…DLLTRVYQHP (239 aa). 68–75 provides a ligand contact to ATP; that stretch reads GPNGAGKS.

The protein belongs to the ABC transporter superfamily. Heme (hemin) importer (TC 3.A.1.14.5) family. The complex is composed of two ATP-binding proteins (HmuV), two transmembrane proteins (HmuU) and a solute-binding protein (HmuT).

It localises to the cell membrane. In terms of biological role, part of the ABC transporter complex HmuTUV involved in hemin import. Responsible for energy coupling to the transport system. This is Hemin import ATP-binding protein HmuV from Nocardia farcinica (strain IFM 10152).